The primary structure comprises 499 residues: Isoflavone 2'-hydroxylase (499 aa).

Heme is bound at residue cysteine 436.

It belongs to the cytochrome P450 family. Heme serves as cofactor.

It is found in the membrane. It carries out the reaction a 2'-unsubstituted isoflavone + reduced [NADPH--hemoprotein reductase] + O2 = a 2'-hydroxyisoflavone + oxidized [NADPH--hemoprotein reductase] + H2O + H(+). In terms of biological role, catalyzes the hydroxylation of isoflavones, daidzein and formononetin, to yield 2'-hydroxyisoflavones, 2'-hydroxydaidzein, and 2'-hydroxyformononetin, respectively. This chain is Isoflavone 2'-hydroxylase (CYP81E1), found in Glycyrrhiza echinata (Licorice).